The primary structure comprises 157 residues: Small ribosomal subunit protein uS7 (157 aa).

This sequence belongs to the universal ribosomal protein uS7 family. Part of the 30S ribosomal subunit. Contacts proteins S9 and S11.

Its function is as follows. One of the primary rRNA binding proteins, it binds directly to 16S rRNA where it nucleates assembly of the head domain of the 30S subunit. Is located at the subunit interface close to the decoding center, probably blocks exit of the E-site tRNA. The polypeptide is Small ribosomal subunit protein uS7 (Polaromonas naphthalenivorans (strain CJ2)).